Consider the following 156-residue polypeptide: MKIQLIAVGTKMPDWVEKGYQEYARRFPKEMQLELLEINAGKRGKNADIKRILKKEGELTLAAIPKGNKIVTLEVTGQAWTTEQLADEMGKWQLDARNISLLIGGPEGLAPECITKSEQRWSLSALTLPHPLVRVIVAESLYRAFTLTINHPYHRE.

S-adenosyl-L-methionine is bound by residues L73, G104, and 123–128 (LSALTL).

This sequence belongs to the RNA methyltransferase RlmH family. In terms of assembly, homodimer.

It is found in the cytoplasm. It carries out the reaction pseudouridine(1915) in 23S rRNA + S-adenosyl-L-methionine = N(3)-methylpseudouridine(1915) in 23S rRNA + S-adenosyl-L-homocysteine + H(+). Functionally, specifically methylates the pseudouridine at position 1915 (m3Psi1915) in 23S rRNA. The protein is Ribosomal RNA large subunit methyltransferase H of Psychromonas ingrahamii (strain DSM 17664 / CCUG 51855 / 37).